Here is a 204-residue protein sequence, read N- to C-terminus: Leucyl/phenylalanyl-tRNA--protein transferase (204 aa).

The protein belongs to the L/F-transferase family.

Its subcellular location is the cytoplasm. It catalyses the reaction N-terminal L-lysyl-[protein] + L-leucyl-tRNA(Leu) = N-terminal L-leucyl-L-lysyl-[protein] + tRNA(Leu) + H(+). The enzyme catalyses N-terminal L-arginyl-[protein] + L-leucyl-tRNA(Leu) = N-terminal L-leucyl-L-arginyl-[protein] + tRNA(Leu) + H(+). It carries out the reaction L-phenylalanyl-tRNA(Phe) + an N-terminal L-alpha-aminoacyl-[protein] = an N-terminal L-phenylalanyl-L-alpha-aminoacyl-[protein] + tRNA(Phe). Functionally, functions in the N-end rule pathway of protein degradation where it conjugates Leu, Phe and, less efficiently, Met from aminoacyl-tRNAs to the N-termini of proteins containing an N-terminal arginine or lysine. This Brucella abortus (strain 2308) protein is Leucyl/phenylalanyl-tRNA--protein transferase.